We begin with the raw amino-acid sequence, 438 residues long: Gamma-glutamyl phosphate reductase (438 aa).

It belongs to the gamma-glutamyl phosphate reductase family.

It localises to the cytoplasm. It catalyses the reaction L-glutamate 5-semialdehyde + phosphate + NADP(+) = L-glutamyl 5-phosphate + NADPH + H(+). The protein operates within amino-acid biosynthesis; L-proline biosynthesis; L-glutamate 5-semialdehyde from L-glutamate: step 2/2. Functionally, catalyzes the NADPH-dependent reduction of L-glutamate 5-phosphate into L-glutamate 5-semialdehyde and phosphate. The product spontaneously undergoes cyclization to form 1-pyrroline-5-carboxylate. The sequence is that of Gamma-glutamyl phosphate reductase from Prochlorococcus marinus (strain MIT 9313).